The following is a 304-amino-acid chain: GTPase Era (304 aa).

The 168-residue stretch at 9–176 (KSGFVSIIGR…LLEITKHLSE (168 aa)) folds into the Era-type G domain. The tract at residues 17-24 (GRPNVGKS) is G1. 17–24 (GRPNVGKS) is a binding site for GTP. Residues 43 to 47 (QTTRN) are G2. The G3 stretch occupies residues 64 to 67 (DTPG). GTP contacts are provided by residues 64–68 (DTPGI) and 126–129 (NKID). The interval 126–129 (NKID) is G4. Residues 155–157 (VSA) are G5. The KH type-2 domain occupies 199-285 (IREKVLHLTR…FLELWVKVQK (87 aa)).

It belongs to the TRAFAC class TrmE-Era-EngA-EngB-Septin-like GTPase superfamily. Era GTPase family. Monomer.

Its subcellular location is the cytoplasm. It is found in the cell membrane. An essential GTPase that binds both GDP and GTP, with rapid nucleotide exchange. Plays a role in 16S rRNA processing and 30S ribosomal subunit biogenesis and possibly also in cell cycle regulation and energy metabolism. The polypeptide is GTPase Era (Halalkalibacterium halodurans (strain ATCC BAA-125 / DSM 18197 / FERM 7344 / JCM 9153 / C-125) (Bacillus halodurans)).